The sequence spans 210 residues: Na(+)-translocating NADH-quinone reductase subunit D (210 aa).

6 helical membrane-spanning segments follow: residues 14–34, 42–62, 72–92, 103–123, 131–151, and 178–198; these read PIVNNNPIALQVLGVCSALAV, LVMALALTAVTAFSNLFISMI, IIVQMTIIASLVIVVDQLLQA, VFVGLIITNCIVMGRAEAYAM, FMDGIGNGLGYGAILLAVGFV, and NGLLLLPPSAFFLIGILIWII.

This sequence belongs to the NqrDE/RnfAE family. Composed of six subunits; NqrA, NqrB, NqrC, NqrD, NqrE and NqrF.

The protein resides in the cell inner membrane. The enzyme catalyses a ubiquinone + n Na(+)(in) + NADH + H(+) = a ubiquinol + n Na(+)(out) + NAD(+). NQR complex catalyzes the reduction of ubiquinone-1 to ubiquinol by two successive reactions, coupled with the transport of Na(+) ions from the cytoplasm to the periplasm. NqrA to NqrE are probably involved in the second step, the conversion of ubisemiquinone to ubiquinol. The sequence is that of Na(+)-translocating NADH-quinone reductase subunit D from Shewanella sp. (strain ANA-3).